We begin with the raw amino-acid sequence, 98 residues long: NADH-ubiquinone oxidoreductase chain 4L (98 aa).

Helical transmembrane passes span 1-21 (MSPL…GLAF), 26-46 (LISA…PLSI), and 56-76 (FALV…TGLA).

Belongs to the complex I subunit 4L family. As to quaternary structure, core subunit of respiratory chain NADH dehydrogenase (Complex I) which is composed of 45 different subunits.

It localises to the mitochondrion inner membrane. It catalyses the reaction a ubiquinone + NADH + 5 H(+)(in) = a ubiquinol + NAD(+) + 4 H(+)(out). In terms of biological role, core subunit of the mitochondrial membrane respiratory chain NADH dehydrogenase (Complex I) which catalyzes electron transfer from NADH through the respiratory chain, using ubiquinone as an electron acceptor. Part of the enzyme membrane arm which is embedded in the lipid bilayer and involved in proton translocation. This Gallus gallus (Chicken) protein is NADH-ubiquinone oxidoreductase chain 4L (MT-ND4L).